Consider the following 225-residue polypeptide: Leucyl/phenylalanyl-tRNA--protein transferase (225 aa).

It belongs to the L/F-transferase family.

It localises to the cytoplasm. The enzyme catalyses N-terminal L-lysyl-[protein] + L-leucyl-tRNA(Leu) = N-terminal L-leucyl-L-lysyl-[protein] + tRNA(Leu) + H(+). It carries out the reaction N-terminal L-arginyl-[protein] + L-leucyl-tRNA(Leu) = N-terminal L-leucyl-L-arginyl-[protein] + tRNA(Leu) + H(+). It catalyses the reaction L-phenylalanyl-tRNA(Phe) + an N-terminal L-alpha-aminoacyl-[protein] = an N-terminal L-phenylalanyl-L-alpha-aminoacyl-[protein] + tRNA(Phe). Functionally, functions in the N-end rule pathway of protein degradation where it conjugates Leu, Phe and, less efficiently, Met from aminoacyl-tRNAs to the N-termini of proteins containing an N-terminal arginine or lysine. The protein is Leucyl/phenylalanyl-tRNA--protein transferase of Nitrobacter winogradskyi (strain ATCC 25391 / DSM 10237 / CIP 104748 / NCIMB 11846 / Nb-255).